Consider the following 287-residue polypeptide: (S)-phenoxypropionate/alpha-ketoglutarate-dioxygenase (287 aa).

His-102 and Asp-104 together coordinate Fe cation. 2-oxoglutarate is bound by residues Thr-129 and Trp-242. Fe cation is bound at residue His-257. Arg-268 contributes to the 2-oxoglutarate binding site.

This sequence belongs to the TfdA dioxygenase family. Monomer. Requires Fe cation as cofactor. It depends on L-ascorbate as a cofactor.

The enzyme catalyses (S)-2-(4-chloro-2-methylphenoxy)propanoate + 2-oxoglutarate + O2 = 2-methyl-4-chlorophenol + pyruvate + succinate + CO2. The catalysed reaction is (S)-(2,4-dichlorophenoxy)propanoate + 2-oxoglutarate + O2 = 2,4-dichlorophenol + pyruvate + succinate + CO2. It functions in the pathway xenobiotic degradation; 2-(2,4-dichlorophenoxy)propanoate degradation. Involved in the degradation of the phenoxypropionate herbicides. Catalyzes the enantiospecific cleavage of the ether bond in the herbicid S-dichlorprop ((S)-2-(2,4-dichlorophenoxy)propionate)(S-2,4-DP) and S-mecoprop ((S)-2-(4-chloro-2-methylphenoxy)propionate)(S-2,4-MCPP). It can also accept (RS)-2-(4-chloro-2-methylphenoxy)propionate ((RS)-2,4-MCPP) and phenoxyacetate derivatives such as 2,4-dichlorophenoxyacetate (2,4-D), however it can only accept 2-oxoglutarate as oxygen acceptor. This chain is (S)-phenoxypropionate/alpha-ketoglutarate-dioxygenase, found in Sphingobium herbicidovorans (strain ATCC 700291 / DSM 11019 / CCUG 56400 / KCTC 2939 / LMG 18315 / NBRC 16415 / MH) (Sphingomonas herbicidovorans).